Consider the following 530-residue polypeptide: T-complex protein 1 subunit zeta (530 aa).

G38 contributes to the ADP binding site. Residue G38 participates in ATP binding. D89 serves as a coordination point for Mg(2+). The ADP site is built by G90, T91, T92, S93, T157, K158, and A410. ATP-binding residues include G90, T91, and T92. ATP contacts are provided by A410, G411, D495, and K500. Residue D495 coordinates ADP.

As to quaternary structure, component of the chaperonin-containing T-complex (TRiC), a hexadecamer composed of two identical back-to-back stacked rings enclosing a protein folding chamber. Each ring is made up of eight different subunits: TCP1/CCT1, CCT2, CCT3, CCT4, CCT5, CCT6A/CCT6, CCT7, CCT8. Interacts with PACRG.

Its subcellular location is the cytoplasm. It catalyses the reaction ATP + H2O = ADP + phosphate + H(+). Functionally, component of the chaperonin-containing T-complex (TRiC), a molecular chaperone complex that assists the folding of actin, tubulin and other proteins upon ATP hydrolysis. In Gallus gallus (Chicken), this protein is T-complex protein 1 subunit zeta.